A 509-amino-acid polypeptide reads, in one-letter code: Histidine ammonia-lyase (509 aa).

Residues 142-144 (ASG) constitute a cross-link (5-imidazolinone (Ala-Gly)). Ser-143 carries the post-translational modification 2,3-didehydroalanine (Ser).

It belongs to the PAL/histidase family. In terms of processing, contains an active site 4-methylidene-imidazol-5-one (MIO), which is formed autocatalytically by cyclization and dehydration of residues Ala-Ser-Gly.

It localises to the cytoplasm. It carries out the reaction L-histidine = trans-urocanate + NH4(+). It participates in amino-acid degradation; L-histidine degradation into L-glutamate; N-formimidoyl-L-glutamate from L-histidine: step 1/3. This is Histidine ammonia-lyase from Pseudomonas aeruginosa (strain UCBPP-PA14).